The following is a 322-amino-acid chain: Ferredoxin--NADP reductase (322 aa).

The FAD site is built by Ser-14, Asp-33, Gln-41, Tyr-46, Ala-86, Phe-120, Asp-278, and Ser-319.

Belongs to the ferredoxin--NADP reductase type 2 family. As to quaternary structure, homodimer. It depends on FAD as a cofactor.

It catalyses the reaction 2 reduced [2Fe-2S]-[ferredoxin] + NADP(+) + H(+) = 2 oxidized [2Fe-2S]-[ferredoxin] + NADPH. In Salinispora arenicola (strain CNS-205), this protein is Ferredoxin--NADP reductase.